A 162-amino-acid polypeptide reads, in one-letter code: Phosphopantetheine adenylyltransferase (162 aa).

Residue S11 participates in substrate binding. Residues 11-12 (SF) and H19 contribute to the ATP site. Substrate is bound by residues K43, V76, and R90. ATP-binding positions include 91 to 93 (GLR), E101, and 126 to 132 (HLYISSS).

This sequence belongs to the bacterial CoaD family. As to quaternary structure, homohexamer. It depends on Mg(2+) as a cofactor.

It localises to the cytoplasm. It catalyses the reaction (R)-4'-phosphopantetheine + ATP + H(+) = 3'-dephospho-CoA + diphosphate. It participates in cofactor biosynthesis; coenzyme A biosynthesis; CoA from (R)-pantothenate: step 4/5. Functionally, reversibly transfers an adenylyl group from ATP to 4'-phosphopantetheine, yielding dephospho-CoA (dPCoA) and pyrophosphate. This Streptococcus pneumoniae (strain Taiwan19F-14) protein is Phosphopantetheine adenylyltransferase.